A 605-amino-acid chain; its full sequence is Dynein axonemal intermediate chain 2 (605 aa).

WD repeat units lie at residues 150–203 (KTIN…IWDL), 208–246 (KPEL…CWDT), 253–294 (AELS…WWDI), 301–347 (TEVV…SCNR), 355–393 (KIVC…IWSE), 399–437 (SIMW…IWDF), and 443–481 (DPTL…LLEV). Residues 568–605 (IKLTPVPQQPSPEEDQVVEEGEEAAGEEGDEEVEEDLA) form a disordered region. Residues 579–605 (PEEDQVVEEGEEAAGEEGDEEVEEDLA) show a composition bias toward acidic residues.

Belongs to the dynein intermediate chain family. As to quaternary structure, consists of at least two heavy chains and a number of intermediate and light chains. Interacts with DNAAF2. Interacts with DNAAF6/PIH1D3. Interacts with HEATR2; probably involved in outer arm dynein assembly. Interacts with CFAP53. As to expression, highly expressed in trachea and testis. Expressed in respiratory ciliated cells (at protein level).

It is found in the cytoplasm. The protein resides in the cytoskeleton. It localises to the cilium axoneme. The protein localises to the dynein axonemal particle. Part of the dynein complex of respiratory cilia. The sequence is that of Dynein axonemal intermediate chain 2 from Homo sapiens (Human).